The chain runs to 385 residues: Glucose-fructose oxidoreductase domain-containing protein 2 (385 aa).

Positions 1–25 (MKLLPGVGVFGTGSSARVLVPLLRA) are cleaved as a signal peptide.

The protein belongs to the Gfo/Idh/MocA family.

It localises to the secreted. The protein localises to the extracellular space. Its subcellular location is the extracellular matrix. Its function is as follows. Promotes matrix assembly. The polypeptide is Glucose-fructose oxidoreductase domain-containing protein 2 (Gfod2) (Mus musculus (Mouse)).